The primary structure comprises 228 residues: 2,3-bisphosphoglycerate-dependent phosphoglycerate mutase (228 aa).

Substrate is bound by residues R8–N15, T21–G22, R60, E87–Y90, K98, R114–R115, and G183–N184. H9 (tele-phosphohistidine intermediate) is an active-site residue. E87 serves as the catalytic Proton donor/acceptor.

The protein belongs to the phosphoglycerate mutase family. BPG-dependent PGAM subfamily.

The enzyme catalyses (2R)-2-phosphoglycerate = (2R)-3-phosphoglycerate. It participates in carbohydrate degradation; glycolysis; pyruvate from D-glyceraldehyde 3-phosphate: step 3/5. Catalyzes the interconversion of 2-phosphoglycerate and 3-phosphoglycerate. This is 2,3-bisphosphoglycerate-dependent phosphoglycerate mutase from Staphylococcus haemolyticus (strain JCSC1435).